Reading from the N-terminus, the 207-residue chain is Pyrrolidone-carboxylate peptidase (207 aa).

Residues glutamate 80, cysteine 143, and histidine 167 contribute to the active site.

This sequence belongs to the peptidase C15 family. In terms of assembly, homotetramer.

It is found in the cytoplasm. The catalysed reaction is Release of an N-terminal pyroglutamyl group from a polypeptide, the second amino acid generally not being Pro.. Its function is as follows. Removes 5-oxoproline from various penultimate amino acid residues except L-proline. The polypeptide is Pyrrolidone-carboxylate peptidase (Coprothermobacter proteolyticus (strain ATCC 35245 / DSM 5265 / OCM 4 / BT)).